Here is a 314-residue protein sequence, read N- to C-terminus: DNA-directed RNA polymerase subunit alpha (314 aa).

Residues 1–228 (MIEIEKPKIE…EHLNIFVGLT (228 aa)) are alpha N-terminal domain (alpha-NTD). An alpha C-terminal domain (alpha-CTD) region spans residues 245–314 (KEKVMEMTIE…DLGLGLRDDD (70 aa)).

This sequence belongs to the RNA polymerase alpha chain family. Homodimer. The RNAP catalytic core consists of 2 alpha, 1 beta, 1 beta' and 1 omega subunit. When a sigma factor is associated with the core the holoenzyme is formed, which can initiate transcription.

The catalysed reaction is RNA(n) + a ribonucleoside 5'-triphosphate = RNA(n+1) + diphosphate. In terms of biological role, DNA-dependent RNA polymerase catalyzes the transcription of DNA into RNA using the four ribonucleoside triphosphates as substrates. The polypeptide is DNA-directed RNA polymerase subunit alpha (Oceanobacillus iheyensis (strain DSM 14371 / CIP 107618 / JCM 11309 / KCTC 3954 / HTE831)).